A 411-amino-acid polypeptide reads, in one-letter code: Dual-specificity RNA methyltransferase RlmN (411 aa).

E125 acts as the Proton acceptor in catalysis. The 250-residue stretch at 131-380 (EEGRGTLCVS…IRTPRGRDIL (250 aa)) folds into the Radical SAM core domain. An intrachain disulfide couples C138 to C383. C145, C149, and C152 together coordinate [4Fe-4S] cluster. S-adenosyl-L-methionine-binding positions include 209-210 (GE), S241, 263-265 (SLH), and N340. The active-site S-methylcysteine intermediate is the C383.

This sequence belongs to the radical SAM superfamily. RlmN family. It depends on [4Fe-4S] cluster as a cofactor.

It is found in the cytoplasm. The enzyme catalyses adenosine(2503) in 23S rRNA + 2 reduced [2Fe-2S]-[ferredoxin] + 2 S-adenosyl-L-methionine = 2-methyladenosine(2503) in 23S rRNA + 5'-deoxyadenosine + L-methionine + 2 oxidized [2Fe-2S]-[ferredoxin] + S-adenosyl-L-homocysteine. The catalysed reaction is adenosine(37) in tRNA + 2 reduced [2Fe-2S]-[ferredoxin] + 2 S-adenosyl-L-methionine = 2-methyladenosine(37) in tRNA + 5'-deoxyadenosine + L-methionine + 2 oxidized [2Fe-2S]-[ferredoxin] + S-adenosyl-L-homocysteine. Its function is as follows. Specifically methylates position 2 of adenine 2503 in 23S rRNA and position 2 of adenine 37 in tRNAs. m2A2503 modification seems to play a crucial role in the proofreading step occurring at the peptidyl transferase center and thus would serve to optimize ribosomal fidelity. This is Dual-specificity RNA methyltransferase RlmN from Brucella anthropi (strain ATCC 49188 / DSM 6882 / CCUG 24695 / JCM 21032 / LMG 3331 / NBRC 15819 / NCTC 12168 / Alc 37) (Ochrobactrum anthropi).